The sequence spans 742 residues: Condensin complex subunit 2 (742 aa).

4 disordered regions span residues 1–62, 151–172, 452–473, and 564–604; these read MKRA…FNSS, QQTE…KKER, FNSS…STER, and IQPH…PSSS. A compositionally biased stretch (basic and acidic residues) spans 21–39; that stretch reads ALEKKRAKENSRKQRELRR. Residues 53–62 show a composition bias toward polar residues; that stretch reads LNNSSPFNSS. The span at 154 to 165 shows a compositional bias: acidic residues; it reads EEGEDAENDDED. 2 stretches are compositionally biased toward polar residues: residues 452–470 and 592–604; these read FNSS…SLSS and PKQT…PSSS.

This sequence belongs to the CND2 (condensin subunit 2) family. As to quaternary structure, component of the condensin complex, which contains the cut14/smc2 and cut3/smc2 heterodimer, and three non SMC subunits that probably regulate the complex: cnd1, cnd2 and cnd3.

Its subcellular location is the nucleus. The protein localises to the cytoplasm. It is found in the chromosome. Regulatory subunit of the condensin complex, a complex required for conversion of interphase chromatin into mitotic-like condense chromosomes. The condensin complex probably introduces positive supercoils into relaxed DNA in the presence of type I topoisomerases and converts nicked DNA into positive knotted forms in the presence of type II topoisomerases. The condensin complex probably also plays a role during interphase in processes such as DNA repair. This is Condensin complex subunit 2 (cnd2) from Schizosaccharomyces pombe (strain 972 / ATCC 24843) (Fission yeast).